The chain runs to 450 residues: Involucrin (450 aa).

A compositionally biased stretch (polar residues) spans 1 to 19; that stretch reads MSQQHTLPVTLPPTLSQEL. Disordered stretches follow at residues 1–43, 77–370, and 422–450; these read MSQQ…LPAP, QLQQ…EQLK, and PGQV…EPEV. Basic and acidic residues predominate over residues 86–108; sequence QEVHLAKHQELQELQEQELHLGK. A compositionally biased stretch (low complexity) spans 120–135; sequence GKQQQQQESQEQELYL. Basic and acidic residues-rich tracts occupy residues 187 to 200 and 264 to 281; these read LGKR…ELHL and QELH…ELHL. Residues 295–344 show a composition bias toward low complexity; sequence GEAAAAGVTGAGPAASKAARRATGAGTAPGKAAAAAGATGAGTAATAPAT. The segment covering 345-370 has biased composition (basic and acidic residues); that stretch reads AEERQKAESLEQQLEQEKAQREEQLK.

Belongs to the involucrin family. As to quaternary structure, directly or indirectly cross-linked to cornifelin (CNFN). Substrate of transglutaminase. Specific glutamines or lysines are cross-linked to keratins, desmoplakin and to inter involucrin molecules. Keratinocytes of epidermis and other stratified squamous epithelia.

It localises to the cytoplasm. In terms of biological role, part of the insoluble cornified cell envelope (CE) of stratified squamous epithelia. This chain is Involucrin (IVL), found in Lemur catta (Ring-tailed lemur).